We begin with the raw amino-acid sequence, 234 residues long: Bromodomain-containing protein DDB_G0271118 (234 aa).

In terms of domain architecture, Bromo spans 1 to 60 (MDLGTIKGELDNNGYSTIKDFTADVRLMFENALTYNADSSPIWKHAKTLLYFHRKHDEHV). Residues 134–194 (NNNSNNNNNN…SSSSSSSSSS (61 aa)) are compositionally biased toward low complexity. The disordered stretch occupies residues 134–209 (NNNSNNNNNN…KKYSDEERRN (76 aa)).

This is Bromodomain-containing protein DDB_G0271118 from Dictyostelium discoideum (Social amoeba).